The sequence spans 338 residues: Probable O-antigen biosynthesis glycosyltransferase WbiN (338 aa).

It belongs to the glycosyltransferase group 1 family. Glycosyltransferase 4 subfamily.

It carries out the reaction N-acetyl-alpha-D-galactosaminyl-di-trans,octa-cis-undecaprenyl diphosphate + UDP-N-acetyl-alpha-D-galactosamine = alpha-D-GalNAc-(1-&gt;3)-alpha-D-GalNAc-di-trans,octa-cis-undecaprenyl diphosphate + UDP + H(+). The protein operates within bacterial outer membrane biogenesis; LPS O-antigen biosynthesis. Involved in the assembly of the O-repeating unit during O-antigen biosynthesis. This is Probable O-antigen biosynthesis glycosyltransferase WbiN from Escherichia coli.